Reading from the N-terminus, the 596-residue chain is A-type ATP synthase subunit A (596 aa).

Residue 241–248 participates in ATP binding; it reads GPFGSGKT.

This sequence belongs to the ATPase alpha/beta chains family. As to quaternary structure, has multiple subunits with at least A(3), B(3), C, D, E, F, H, I and proteolipid K(x).

It localises to the cell membrane. It catalyses the reaction ATP + H2O + 4 H(+)(in) = ADP + phosphate + 5 H(+)(out). In terms of biological role, component of the A-type ATP synthase that produces ATP from ADP in the presence of a proton gradient across the membrane. The A chain is the catalytic subunit. This is A-type ATP synthase subunit A from Ignicoccus hospitalis (strain KIN4/I / DSM 18386 / JCM 14125).